A 93-amino-acid polypeptide reads, in one-letter code: Small ribosomal subunit protein uS19 (93 aa).

The protein belongs to the universal ribosomal protein uS19 family.

Functionally, protein S19 forms a complex with S13 that binds strongly to the 16S ribosomal RNA. The polypeptide is Small ribosomal subunit protein uS19 (Geotalea uraniireducens (strain Rf4) (Geobacter uraniireducens)).